An 85-amino-acid polypeptide reads, in one-letter code: Large ribosomal subunit protein bL27 (85 aa).

A compositionally biased stretch (gly residues) spans 1-10 (MAQKKGGGST). The disordered stretch occupies residues 1-21 (MAQKKGGGSTRNGRDSQPKML).

This sequence belongs to the bacterial ribosomal protein bL27 family.

This chain is Large ribosomal subunit protein bL27, found in Leptothrix cholodnii (strain ATCC 51168 / LMG 8142 / SP-6) (Leptothrix discophora (strain SP-6)).